Consider the following 1057-residue polypeptide: Desmoglein-1-alpha (1057 aa).

The first 23 residues, 1–23, serve as a signal peptide directing secretion; it reads MDWHSFRIAALLLTSLVVLEVNS. Residues 24-49 constitute a propeptide that is removed on maturation; that stretch reads EFQIQVRDHNAKNGTIKWHSIRRQKR. Cadherin domains are found at residues 50 to 157, 158 to 269, 270 to 389, and 386 to 493; these read EWIK…PPVF, SMTT…IPYL, EQSS…RPGS, and RPGS…TGSE. Residues 50-564 are Extracellular-facing; that stretch reads EWIKFAAACR…LYGDNVHFGP (515 aa). Residues Asn-110 and Asn-180 are each glycosylated (N-linked (GlcNAc...) asparagine). The tract at residues 490 to 552 is disordered; sequence TGSESGGSSS…FQGDPDETLE (63 aa). Residues 510–525 are compositionally biased toward polar residues; sequence NGYQGTSSTENPQRVT. Residues 565-585 form a helical membrane-spanning segment; sequence AGIGLLIMGFLVLGLVPFLLI. Residues 586 to 1057 are Cytoplasmic-facing; the sequence is CCDCGGAPGG…TKYNTVQYSK (472 aa). 5 Desmoglein repeat repeats span residues 832-858, 859-888, 889-918, 919-946, and 947-975; these read AYHSGPGVQHPVPIPDPLGYGNVTVRE, SYTTSGTLKPSVHFHDNQQASNVVVTERVV, GPISGADLHGMLEIPDLRGGANVIVTERVI, APGSSLPTSLTIPNPQETSNVVVTERVI, and QPTSGMIGNLSMTPELSSAHNVIVTERVV.

As to quaternary structure, binds to JUP/plakoglobin. Interacts with PKP2. Interacts with DSC3; there is evidence to suggest that the interaction promotes cell-cell adhesion of keratinocytes. As to expression, expressed in testis.

The protein localises to the cell membrane. It localises to the cell junction. The protein resides in the desmosome. It is found in the cytoplasm. Its subcellular location is the nucleus. In terms of biological role, component of intercellular desmosome junctions. Involved in the interaction of plaque proteins and intermediate filaments mediating cell-cell adhesion. The sequence is that of Desmoglein-1-alpha (Dsg1a) from Mus musculus (Mouse).